We begin with the raw amino-acid sequence, 682 residues long: Protein PilJ (682 aa).

Residues 1–14 (MKKINAGNLFAGMR) lie on the Cytoplasmic side of the membrane. Residues 15-38 (SSSVIAGLFIVLIVSIVLLFANFA) form a helical membrane-spanning segment. Residues 39–306 (YLNTQSNHDK…DGFENLAGGR (268 aa)) lie on the Periplasmic side of the membrane. Residues 307–333 (SINLFAGYALGALALASIILIGLVMVR) form a helical membrane-spanning segment. Residues 334–682 (ETNRRLAETA…FKLPEGVEQA (349 aa)) are Cytoplasmic-facing. Residues 347-398 (DRNQAAILRLLDEIADLADGDLTVAATVTEDFTGAIADSINYSIDQLRELVE) form the HAMP domain. Positions 403–639 (TAVQVAAAAQ…HISNTMNVIQ (237 aa)) constitute a Methyl-accepting transducer domain.

This sequence belongs to the methyl-accepting chemotaxis (MCP) protein family.

The protein localises to the cell inner membrane. Its function is as follows. May be a part of a signal-transduction system that regulates twitching motility by controlling pilus function (extension and retraction). This chain is Protein PilJ (pilJ), found in Pseudomonas aeruginosa (strain ATCC 15692 / DSM 22644 / CIP 104116 / JCM 14847 / LMG 12228 / 1C / PRS 101 / PAO1).